Reading from the N-terminus, the 308-residue chain is MQCTICHRPSTVWYCAHCVNTSPKLILRYKLELTQICEEVTEMRDIVTSTLENAISEKEGLLGKHMERLQHLRLKRYNARLSHRARELEQHLDSKLSRRDGLRRALKQLSPDVAVVPAEDPDEYRELRHKLTLLQNVVSMKSTQKFEELCQWFVFTCSTTEDDHFPYSIRFIPVCNIRNWRLLSTAQESLQHMCEFVIYASRALLVDIPFGSHSEKLTTDHIAAVSHFTVNLLTILIKRKRLQERPDVPDLLGRYDIDGLLYLLCSGGDVESITGTCPPTYKVVHEFVRTALEDGDQSEERGHWMVLE.

The interval 3 to 18 is cysteine repeats; that stretch reads CTICHRPSTVWYCAHC. Residues 73–109 are a coiled coil; the sequence is RLKRYNARLSHRARELEQHLDSKLSRRDGLRRALKQL.

Belongs to the ATG14 family.

The protein resides in the preautophagosomal structure membrane. The protein localises to the vacuole membrane. Required for cytoplasm to vacuole transport (Cvt) and autophagy as a part of the autophagy-specific VPS34 PI3-kinase complex I. This complex is essential to recruit the ATG8-phosphatidylinositol conjugate and the ATG12-ATG5 conjugate to the pre-autophagosomal structure. ATG14 mediates the specific binding of the VPS34 PI3-kinase complex I to the preautophagosomal structure (PAS). This Eremothecium gossypii (strain ATCC 10895 / CBS 109.51 / FGSC 9923 / NRRL Y-1056) (Yeast) protein is Autophagy-related protein 14 (ATG14).